A 326-amino-acid polypeptide reads, in one-letter code: Flotillin-like protein FloA (326 aa).

Residues 3–23 form a helical membrane-spanning segment; it reads FTTIVVILLVIACIVVLFFIG.

It belongs to the flotillin-like FloA family. In terms of assembly, homooligomerizes.

Its subcellular location is the cell membrane. It is found in the membrane raft. Found in functional membrane microdomains (FMM) that may be equivalent to eukaryotic membrane rafts. FMMs are highly dynamic and increase in number as cells age. Flotillins are thought to be important factors in membrane fluidity. The chain is Flotillin-like protein FloA from Desulforapulum autotrophicum (strain ATCC 43914 / DSM 3382 / VKM B-1955 / HRM2) (Desulfobacterium autotrophicum).